The sequence spans 489 residues: Protein-export membrane protein SecD (489 aa).

6 helical membrane passes run 17 to 37, 328 to 348, 356 to 376, 384 to 404, 428 to 448, and 450 to 470; these read VLIV…IPPA, FIQI…AFMV, SIVV…LGIA, LASI…LVVI, LGII…LALM, and LSTL…GVIF.

Belongs to the SecD/SecF family. SecD subfamily. In terms of assembly, part of the protein translocation apparatus. Forms a complex with SecF.

The protein localises to the cell membrane. Involved in protein export. The protein is Protein-export membrane protein SecD of Methanolacinia petrolearia (strain DSM 11571 / OCM 486 / SEBR 4847) (Methanoplanus petrolearius).